We begin with the raw amino-acid sequence, 1325 residues long: RIMS-binding protein 2 (1325 aa).

Positions 153-181 (TFLSKSRSDTPRCRFDSDMDNDQNSNTSK) are disordered. Residues 158–169 (SRSDTPRCRFDS) show a composition bias toward basic and acidic residues. The 68-residue stretch at 186 to 253 (GKVHLCIARY…PSNFVDFVQD (68 aa)) folds into the SH3 1 domain. 3 consecutive Fibronectin type-III domains span residues 315–408 (VPYP…GKDV), 411–493 (APSN…KKEA), and 507–608 (PPQD…VPPS). 3 disordered regions span residues 601 to 778 (SDLL…GSDL), 988 to 1010 (DLGS…KKYE), and 1040 to 1090 (AAGP…SRPM). Residues 627–641 (ETKEEHLGPHLKIDE) show a composition bias toward basic and acidic residues. Residues 664-676 (FPSSLQGRRSPSP) are compositionally biased toward polar residues. Basic and acidic residues predominate over residues 696–716 (MAREAAQRVAESNRMERRSVF). Positions 717–727 (SERSNAAQYAN) are enriched in polar residues. Basic and acidic residues-rich tracts occupy residues 763-774 (CHGEDYHTESSR) and 996-1010 (PRSE…KKYE). 2 consecutive SH3 domains span residues 1121–1189 (ISTR…EIQA) and 1225–1292 (VSTR…EVPD).

Belongs to the RIMBP family. Interacts with RIMS1, RIMS2, CACNA1D and CACNA1B, and potentially with other Ca(2+) channel alpha-1 isoforms. In terms of tissue distribution, brain, cochlea and retina.

It localises to the cell membrane. The protein resides in the synapse. In terms of biological role, plays a role in the synaptic transmission as bifunctional linker that interacts simultaneously with RIMS1, RIMS2, CACNA1D and CACNA1B. The polypeptide is RIMS-binding protein 2 (RIMBP2) (Gallus gallus (Chicken)).